Here is a 792-residue protein sequence, read N- to C-terminus: Terminal nucleotidyltransferase 4A (792 aa).

Residues 55-191 (GAAGRGSGGL…QFHPGRRKRE (137 aa)) form a disordered region. 2 stretches are compositionally biased toward low complexity: residues 80-97 (APAA…PAAE) and 105-139 (SPSL…ASLG). Positions 297 and 299 each coordinate Mg(2+). 4 residues coordinate ATP: Gly-360, Lys-385, Ser-403, and Tyr-404. Positions 428 to 486 (NLGMLLVEFFELYGRNFNYLKTGIRIKEGGAYIAKEEIMKAMTSGYRPSMLCIEDPLLP) constitute a PAP-associated domain. Positions 488 and 492 each coordinate ATP. The segment covering 601-619 (QLLSSGSSASSVSSLSGSD) has biased composition (low complexity). Disordered regions lie at residues 601–632 (QLLS…TPSV) and 737–792 (MKGS…SLSR). The span at 744–756 (TQGGGYSSVGSGG) shows a compositional bias: gly residues. Over residues 764-781 (RGHHQYNRTGWRRKKHTH) the composition is skewed to basic residues.

It belongs to the DNA polymerase type-B-like family. In terms of assembly, component of a nuclear TRAMP-like complex, an ATP-dependent exosome regulatory complex consisting of a helicase (MTREX), an oligadenylate polymerase (TENT4B or TENT4A), and a substrate specific RNA-binding factor (ZCCHC7 or ZCCHC8). Several TRAMP-like complexes exist with specific compositions and are associated with nuclear, or nucleolar RNA exosomes. Requires Mg(2+) as cofactor. The cofactor is Mn(2+).

The protein resides in the cytoplasm. Its subcellular location is the nucleus. It is found in the nucleoplasm. It carries out the reaction RNA(n) + ATP = RNA(n)-3'-adenine ribonucleotide + diphosphate. Its function is as follows. Terminal nucleotidyltransferase that catalyzes preferentially the transfer of ATP and GTP on RNA 3' poly(A) tail creating a heterogeneous 3' poly(A) tail leading to mRNAs stabilization by protecting mRNAs from active deadenylation. Also functions as a catalytic subunit of a TRAMP-like complex which has a poly(A) RNA polymerase activity and is involved in a post-transcriptional quality control mechanism. Polyadenylation with short oligo(A) tails is required for the degradative activity of the exosome on several of its nuclear RNA substrates. Has no terminal uridylyltransferase activity, and does not play a role in replication-dependent histone mRNA degradation via uridylation. This Homo sapiens (Human) protein is Terminal nucleotidyltransferase 4A.